Consider the following 510-residue polypeptide: Anaerobic nitric oxide reductase transcription regulator NorR (510 aa).

The region spanning 188 to 417 is the Sigma-54 factor interaction domain; that stretch reads IIGNSQGMRT…LEHVIKRAAV (230 aa). Residues 216–223 and 279–288 each bind ATP; these read GETGVGKE and ADGGTLFLDE. Positions 486 to 505 form a DNA-binding region, H-T-H motif; it reads WAATARQLELDSGNLHRLAK.

It functions in the pathway nitrogen metabolism; nitric oxide reduction. Functionally, required for the expression of anaerobic nitric oxide (NO) reductase, acts as a transcriptional activator for at least the norVW operon. Activation also requires sigma-54. This chain is Anaerobic nitric oxide reductase transcription regulator NorR, found in Vibrio vulnificus (strain YJ016).